A 444-amino-acid chain; its full sequence is ATP-dependent protease ATPase subunit HslU (444 aa).

Residues Ile-20, 62–67, Asp-257, Glu-322, and Arg-394 each bind ATP; that span reads GVGKTE.

The protein belongs to the ClpX chaperone family. HslU subfamily. As to quaternary structure, a double ring-shaped homohexamer of HslV is capped on each side by a ring-shaped HslU homohexamer. The assembly of the HslU/HslV complex is dependent on binding of ATP.

It is found in the cytoplasm. In terms of biological role, ATPase subunit of a proteasome-like degradation complex; this subunit has chaperone activity. The binding of ATP and its subsequent hydrolysis by HslU are essential for unfolding of protein substrates subsequently hydrolyzed by HslV. HslU recognizes the N-terminal part of its protein substrates and unfolds these before they are guided to HslV for hydrolysis. This Bordetella avium (strain 197N) protein is ATP-dependent protease ATPase subunit HslU.